A 732-amino-acid polypeptide reads, in one-letter code: Polyribonucleotide nucleotidyltransferase (732 aa).

Mg(2+) contacts are provided by aspartate 516 and aspartate 522. The region spanning 582–642 (PSSHTITVHP…PKVIAACDYI (61 aa)) is the KH domain. The S1 motif domain maps to 659-726 (GDILKGKIKR…KGHKIELGLR (68 aa)).

It belongs to the polyribonucleotide nucleotidyltransferase family. Mg(2+) is required as a cofactor.

The protein resides in the cytoplasm. It catalyses the reaction RNA(n+1) + phosphate = RNA(n) + a ribonucleoside 5'-diphosphate. Its function is as follows. Involved in mRNA degradation. Catalyzes the phosphorolysis of single-stranded polyribonucleotides processively in the 3'- to 5'-direction. The protein is Polyribonucleotide nucleotidyltransferase of Nitratiruptor sp. (strain SB155-2).